We begin with the raw amino-acid sequence, 309 residues long: CDK-activating kinase assembly factor MAT1 (309 aa).

The segment at 6–50 adopts an RING-type zinc-finger fold; the sequence is CPRCKTTKYRNPSLKLMVNVCGHTLCESCVELLFVRGSGSCQECD. Residues 142-161 form the UIM domain; it reads REQEELEEALEMEKHENEQR.

In terms of assembly, associates with CDK7 and cyclin H.

It localises to the nucleus. In terms of biological role, stabilizes the cyclin H-CDK7 complex to form a functional CDK-activating kinase (CAK) enzymatic complex. The sequence is that of CDK-activating kinase assembly factor MAT1 (mnat1) from Xenopus laevis (African clawed frog).